The sequence spans 258 residues: UPF0246 protein mma_1385 (258 aa).

It belongs to the UPF0246 family.

This Janthinobacterium sp. (strain Marseille) (Minibacterium massiliensis) protein is UPF0246 protein mma_1385.